A 143-amino-acid polypeptide reads, in one-letter code: Fido domain-containing protein DDB_G0283145 (143 aa).

Residues 1-128 (MKGIIVSDGV…TSHLALIILN (128 aa)) form the Fido domain. A helical transmembrane segment spans residues 49–69 (SSPYAVAAWLLHAFVSIHPFI).

The protein localises to the membrane. The protein is Fido domain-containing protein DDB_G0283145 of Dictyostelium discoideum (Social amoeba).